We begin with the raw amino-acid sequence, 236 residues long: Ribose-5-phosphate isomerase A (236 aa).

Substrate contacts are provided by residues 28–31, 83–86, and 96–99; these read TGST, DGAD, and KGGG. The Proton acceptor role is filled by E105. Residue K123 coordinates substrate.

It belongs to the ribose 5-phosphate isomerase family. As to quaternary structure, homodimer.

It carries out the reaction aldehydo-D-ribose 5-phosphate = D-ribulose 5-phosphate. Its pathway is carbohydrate degradation; pentose phosphate pathway; D-ribose 5-phosphate from D-ribulose 5-phosphate (non-oxidative stage): step 1/1. In terms of biological role, catalyzes the reversible conversion of ribose-5-phosphate to ribulose 5-phosphate. The protein is Ribose-5-phosphate isomerase A of Methylorubrum populi (strain ATCC BAA-705 / NCIMB 13946 / BJ001) (Methylobacterium populi).